The following is a 190-amino-acid chain: Threonylcarbamoyl-AMP synthase (190 aa).

The 183-residue stretch at 8 to 190 (RFRIRQCAAR…DAESGAVIRA (183 aa)) folds into the YrdC-like domain.

It belongs to the SUA5 family. TsaC subfamily.

The protein resides in the cytoplasm. The catalysed reaction is L-threonine + hydrogencarbonate + ATP = L-threonylcarbamoyladenylate + diphosphate + H2O. Required for the formation of a threonylcarbamoyl group on adenosine at position 37 (t(6)A37) in tRNAs that read codons beginning with adenine. Catalyzes the conversion of L-threonine, HCO(3)(-)/CO(2) and ATP to give threonylcarbamoyl-AMP (TC-AMP) as the acyladenylate intermediate, with the release of diphosphate. The protein is Threonylcarbamoyl-AMP synthase of Alkalilimnicola ehrlichii (strain ATCC BAA-1101 / DSM 17681 / MLHE-1).